The sequence spans 177 residues: MWTIMIGSKNRAKVHALQEVVIRDKIIVRSEAVPSDVASQPFSDQETIQGAINRANHCLSFDGVDYGVGLEGGVVRSEYGLFLCNWGALVSQTGDQWVAGGARVPLPQEVAHELEGGKELGDIMESLTKNPDVRMTDGAIGYLTDGEISRKAMFQHVVHLLIGQARRDGHLLRTVTH.

The protein belongs to the YjjX NTPase family. In terms of assembly, homodimer. The cofactor is Mg(2+). Mn(2+) is required as a cofactor.

It carries out the reaction XTP + H2O = XDP + phosphate + H(+). It catalyses the reaction ITP + H2O = IDP + phosphate + H(+). Its function is as follows. Phosphatase that hydrolyzes non-canonical purine nucleotides such as XTP and ITP to their respective diphosphate derivatives. Probably excludes non-canonical purines from DNA/RNA precursor pool, thus preventing their incorporation into DNA/RNA and avoiding chromosomal lesions. This chain is Probable inosine/xanthosine triphosphatase, found in Halalkalibacterium halodurans (strain ATCC BAA-125 / DSM 18197 / FERM 7344 / JCM 9153 / C-125) (Bacillus halodurans).